The following is a 271-amino-acid chain: Aminoglycoside 3'-phosphotransferase (271 aa).

Asp198 (proton acceptor) is an active-site residue.

It belongs to the aminoglycoside phosphotransferase family.

It carries out the reaction kanamycin A + ATP = kanamycin 3'-phosphate + ADP + H(+). In terms of biological role, resistance to kanamycin and structurally-related aminoglycosides, including amikacin. The protein is Aminoglycoside 3'-phosphotransferase (aphA1) of Escherichia coli.